A 123-amino-acid chain; its full sequence is Guanine nucleotide exchange factor MSS4 (123 aa).

N-acetylmethionine is present on methionine 1. Positions 9-123 constitute an MSS4 domain; the sequence is ELVSAEGRNR…YVALERVSHE (115 aa). Cysteine 23, cysteine 26, cysteine 94, and cysteine 97 together coordinate Zn(2+).

It belongs to the DSS4/MSS4 family. In terms of assembly, interacts with RAB8A. Ubiquitous.

Functionally, guanine-nucleotide-releasing protein that acts on members of the SEC4/YPT1/RAB subfamily. Stimulates GDP release from both YPT1, RAB3A and RAB10, but is less active on these proteins than on the SEC4 protein. Might play a general role in vesicular transport. The chain is Guanine nucleotide exchange factor MSS4 (Rabif) from Rattus norvegicus (Rat).